Consider the following 169-residue polypeptide: Succinate dehydrogenase cytochrome b560 subunit, mitochondrial (169 aa).

The N-terminal 29 residues, 1-29 (MAALLLRHVGRHCLRAHFSPQLCIRNAVP), are a transit peptide targeting the mitochondrion. At 30–65 (LGTTAKEEMERFWNKNIGSNRPLSPHITIYSWSLPM) the chain is on the mitochondrial matrix side. The helical transmembrane segment at 66–90 (AMSICHRGTGIALSAGVSLFGMSAL) threads the bilayer. Residues 91-110 (LLPGNFESYLELVKSLCLGP) are Mitochondrial intermembrane-facing. The chain crosses the membrane as a helical span at residues 111–139 (ALIHTAKFALVFPLMYHTWNGIRHLMWDL). H127 is a binding site for heme b. Over 140–146 (GKGLKIP) the chain is Mitochondrial matrix. Residues 147–167 (QLYQSGVVVLVLTVLSSMGLA) traverse the membrane as a helical segment. At 168–169 (AM) the chain is on the mitochondrial intermembrane side.

This sequence belongs to the cytochrome b560 family. In terms of assembly, component of complex II composed of four subunits: the flavoprotein (FP) SDHA, iron-sulfur protein (IP) SDHB, and a cytochrome b560 composed of SDHC and SDHD. Heme b is required as a cofactor.

It localises to the mitochondrion inner membrane. It participates in carbohydrate metabolism; tricarboxylic acid cycle. Functionally, membrane-anchoring subunit of succinate dehydrogenase (SDH) that is involved in complex II of the mitochondrial electron transport chain and is responsible for transferring electrons from succinate to ubiquinone (coenzyme Q). SDH also oxidizes malate to the non-canonical enol form of oxaloacetate, enol-oxaloacetate. Enol-oxaloacetate, which is a potent inhibitor of the succinate dehydrogenase activity, is further isomerized into keto-oxaloacetate. The chain is Succinate dehydrogenase cytochrome b560 subunit, mitochondrial (SDHC) from Homo sapiens (Human).